Reading from the N-terminus, the 701-residue chain is Potassium-transporting ATPase ATP-binding subunit (701 aa).

The segment at 1 to 28 (MNPDAPTPKNKSSRSRPSDRPQARKKAK) is disordered. Transmembrane regions (helical) follow at residues 57–77 (MFLV…PNLF), 90–110 (GILT…EAVA), 245–265 (VLLA…PVFA), and 276–296 (ILVA…LSAI). Catalysis depends on Asp-329, which acts as the 4-aspartylphosphate intermediate. ATP contacts are provided by residues Asp-366, Glu-370, 397-404 (FSAKTRMS), and Lys-416. Mg(2+)-binding residues include Asp-539 and Asp-543. 3 helical membrane-spanning segments follow: residues 599–619 (FSLA…FASA), 635–655 (AVLS…PLAL), and 681–701 (VIAP…VGLA).

The protein belongs to the cation transport ATPase (P-type) (TC 3.A.3) family. Type IA subfamily. As to quaternary structure, the system is composed of three essential subunits: KdpA, KdpB and KdpC.

The protein resides in the cell membrane. It carries out the reaction K(+)(out) + ATP + H2O = K(+)(in) + ADP + phosphate + H(+). Functionally, part of the high-affinity ATP-driven potassium transport (or Kdp) system, which catalyzes the hydrolysis of ATP coupled with the electrogenic transport of potassium into the cytoplasm. This subunit is responsible for energy coupling to the transport system and for the release of the potassium ions to the cytoplasm. In Anabaena sp. (strain L31), this protein is Potassium-transporting ATPase ATP-binding subunit.